The chain runs to 46 residues: Amine oxidase [flavin-containing] A (46 aa).

Belongs to the flavin monoamine oxidase family. Monomer, homo- or heterodimer (containing two subunits of similar size). Each subunit contains a covalently bound flavin. Enzymatically active as monomer. FAD is required as a cofactor.

Its subcellular location is the mitochondrion outer membrane. It catalyses the reaction a secondary aliphatic amine + O2 + H2O = a primary amine + an aldehyde + H2O2. The catalysed reaction is a primary methyl amine + O2 + H2O = an aldehyde + H2O2 + NH4(+). It carries out the reaction (R)-adrenaline + O2 + H2O = (R)-3,4-dihydroxymandelaldehyde + methylamine + H2O2. The enzyme catalyses dopamine + O2 + H2O = 3,4-dihydroxyphenylacetaldehyde + H2O2 + NH4(+). It catalyses the reaction tyramine + O2 + H2O = (4-hydroxyphenyl)acetaldehyde + H2O2 + NH4(+). The catalysed reaction is (R)-noradrenaline + O2 + H2O = (R)-3,4-dihydroxymandelaldehyde + H2O2 + NH4(+). It carries out the reaction serotonin + O2 + H2O = (5-hydroxyindol-3-yl)acetaldehyde + H2O2 + NH4(+). The enzyme catalyses kynuramine + O2 + H2O = 3-(2-aminophenyl)-3-oxopropanal + H2O2 + NH4(+). It catalyses the reaction tryptamine + O2 + H2O = indole-3-acetaldehyde + H2O2 + NH4(+). The catalysed reaction is 2-phenylethylamine + O2 + H2O = 2-phenylacetaldehyde + H2O2 + NH4(+). Catalyzes the oxidative deamination of primary and some secondary amine such as neurotransmitters, with concomitant reduction of oxygen to hydrogen peroxide and has important functions in the metabolism of neuroactive and vasoactive amines in the central nervous system and peripheral tissues. Preferentially oxidizes serotonin. Also catalyzes the oxidative deamination of kynuramine to 3-(2-aminophenyl)-3-oxopropanal that can spontaneously condense to 4-hydroxyquinoline. This chain is Amine oxidase [flavin-containing] A, found in Ovis aries (Sheep).